The chain runs to 198 residues: Inosine triphosphate pyrophosphatase (198 aa).

Ala2 is modified (N-acetylalanine). 14-19 (TGNAKK) serves as a coordination point for ITP. A Mg(2+)-binding site is contributed by Glu44. ITP-binding positions include Lys56, 72–73 (DT), and Lys89. Position 146 is a phosphoserine (Ser146). ITP-binding positions include 149 to 152 (FGWD), Lys172, and 177 to 178 (HR).

It belongs to the HAM1 NTPase family. Homodimer. Requires Mg(2+) as cofactor. Mn(2+) is required as a cofactor.

It localises to the cytoplasm. It catalyses the reaction ITP + H2O = IMP + diphosphate + H(+). The catalysed reaction is dITP + H2O = dIMP + diphosphate + H(+). It carries out the reaction XTP + H2O = XMP + diphosphate + H(+). The enzyme catalyses N(6)-hydroxy-dATP + H2O = N(6)-hydroxy-dAMP + diphosphate + H(+). Pyrophosphatase that hydrolyzes the non-canonical purine nucleotides inosine triphosphate (ITP), deoxyinosine triphosphate (dITP) as well as 2'-deoxy-N-6-hydroxylaminopurine triphosphate (dHAPTP) and xanthosine 5'-triphosphate (XTP) to their respective monophosphate derivatives. The enzyme does not distinguish between the deoxy- and ribose forms. Probably excludes non-canonical purines from RNA and DNA precursor pools, thus preventing their incorporation into RNA and DNA and avoiding chromosomal lesions. In Rattus norvegicus (Rat), this protein is Inosine triphosphate pyrophosphatase (Itpa).